Reading from the N-terminus, the 852-residue chain is Zinc finger protein 484 (852 aa).

A KRAB domain is found at V8–P78. K156 is covalently cross-linked (Glycyl lysine isopeptide (Lys-Gly) (interchain with G-Cter in SUMO2)). The C2H2-type 1; degenerate zinc-finger motif lies at C223 to H245. The C2H2-type 2; degenerate zinc finger occupies H279–Y301. The C2H2-type 3; degenerate zinc-finger motif lies at Y328–H350. The segment at Y356–H378 adopts a C2H2-type 4; degenerate zinc-finger fold. C2H2-type zinc fingers lie at residues F384–H406, Y412–H434, Y440–H462, F468–H490, Y496–H518, Y524–H546, Y552–H574, Y580–H602, Y608–H630, Y636–H658, Y664–H686, Y692–H714, Y720–H742, Y748–H770, and Y776–H798. K816 participates in a covalent cross-link: Glycyl lysine isopeptide (Lys-Gly) (interchain with G-Cter in SUMO2).

It belongs to the krueppel C2H2-type zinc-finger protein family.

It is found in the nucleus. May be involved in transcriptional regulation. In Homo sapiens (Human), this protein is Zinc finger protein 484 (ZNF484).